The sequence spans 474 residues: E3 ubiquitin-protein ligase CBL-C (474 aa).

Residues 7 to 145 form a 4H region; it reads PWGRQWEEAR…HALFPGGKYC (139 aa). The Cbl-PTB domain maps to 7–321; that stretch reads PWGRQWEEAR…GKTHNPDLTE (315 aa). The segment at 146–218 is EF-hand-like; sequence GHMYQLTKAP…FEFDVFTRLF (73 aa). Ca(2+) is bound by residues Asp-199, Thr-201, and Glu-210. The interval 219–321 is SH2-like; sequence QPWPTLLKNW…GKTHNPDLTE (103 aa). Arg-264 contributes to the 4-O-phospho-L-tyrosine binding site. The linker stretch occupies residues 322–350; it reads LGQAEPQQRIHVSEEQLQLYWAMDSTFEL. Tyr-341 carries the post-translational modification Phosphotyrosine; by SRC. The RING-type zinc finger occupies 351–390; it reads CKICAESNKDVKIEPCGHLLCSCCLAAWQHSDSQTCPFCR. The interaction with RET stretch occupies residues 351–474; it reads CKICAESNKD…ALGPQDPAPA (124 aa). The disordered stretch occupies residues 409–474; the sequence is TAEDSGNSSD…ALGPQDPAPA (66 aa). The segment covering 432-441 has biased composition (pro residues); it reads SAPPLPPRPD.

In terms of assembly, interacts with ubiquitin-conjugating enzyme E2 UBE2D2 and UBE2D3. Isoform 1 interacts with EGFR (tyrosine phosphorylated). Interacts with the SH3 domain proteins LYN and CRK. Interacts (via RING-type zinc finger) with TGFB1I1 (via LIM zinc-binding domain 2); the interaction is direct and enhances the E3 activity. Interacts directly with RET (inactive) and CD2AP; dissociates from RET upon RET activation by GDNF which also increases the interaction with CD2AP suggesting dissociation as CBLC:CD2AP complex. Interacts with SRC; the interaction is enhanced when SRC is phosphorylated at 'Tyr-419'. Post-translationally, phosphorylated on multiple tyrosine residues by SRC. Isoform 1, but not isoform 2, is phosphorylated on tyrosines by EGFR. In terms of processing, autoubiquitinated when phosphorylated at Tyr-341, enhanced by SRC; suggesting proteasomal degradation. As to expression, ubiquitous.

It carries out the reaction S-ubiquitinyl-[E2 ubiquitin-conjugating enzyme]-L-cysteine + [acceptor protein]-L-lysine = [E2 ubiquitin-conjugating enzyme]-L-cysteine + N(6)-ubiquitinyl-[acceptor protein]-L-lysine.. Phosphorylation at Tyr-341 is necessary and sufficient for the activation of E3 activity. Acts as an E3 ubiquitin-protein ligase, which accepts ubiquitin from specific E2 ubiquitin-conjugating enzymes, and then transfers it to substrates promoting their degradation by the proteasome. Functionally coupled with the E2 ubiquitin-protein ligases UB2D1, UB2D2 and UB2D3. Regulator of EGFR mediated signal transduction; upon EGF activation, ubiquitinates EGFR. Isoform 1, but not isoform 2, inhibits EGF stimulated MAPK1 activation. Promotes ubiquitination of SRC phosphorylated at 'Tyr-419'. In collaboration with CD2AP may act as regulatory checkpoint for Ret signaling by modulating the rate of RET degradation after ligand activation; CD2AP converts it from an inhibitor to a promoter of RET degradation; the function limits the potency of GDNF on neuronal survival. This chain is E3 ubiquitin-protein ligase CBL-C (CBLC), found in Homo sapiens (Human).